Consider the following 221-residue polypeptide: Hydrogenase expression/formation protein HupD (221 aa).

Ni(2+)-binding residues include glutamate 20, aspartate 66, and histidine 97.

It belongs to the peptidase A31 family.

In terms of biological role, not known. Could be involved in the processing of hydrogenase. The sequence is that of Hydrogenase expression/formation protein HupD (hupD) from Thiocapsa roseopersicina.